The sequence spans 87 residues: MVSLMKLWIPMLMTFFCTVLLSVLGEMRKKRYDRKELLLEECWGKPNVKECTNKCSKAFRCKDKNYTCCWTYCGNICWINVETSGDY.

The first 25 residues, 1–25, serve as a signal peptide directing secretion; that stretch reads MVSLMKLWIPMLMTFFCTVLLSVLG.

It localises to the secreted. The polypeptide is Protein WFDC11 (WFDC11) (Homo sapiens (Human)).